We begin with the raw amino-acid sequence, 242 residues long: Ubiquinone biosynthesis O-methyltransferase (242 aa).

Positions 44, 64, 85, and 129 each coordinate S-adenosyl-L-methionine.

This sequence belongs to the methyltransferase superfamily. UbiG/COQ3 family.

The enzyme catalyses a 3-demethylubiquinol + S-adenosyl-L-methionine = a ubiquinol + S-adenosyl-L-homocysteine + H(+). It catalyses the reaction a 3-(all-trans-polyprenyl)benzene-1,2-diol + S-adenosyl-L-methionine = a 2-methoxy-6-(all-trans-polyprenyl)phenol + S-adenosyl-L-homocysteine + H(+). It functions in the pathway cofactor biosynthesis; ubiquinone biosynthesis. In terms of biological role, O-methyltransferase that catalyzes the 2 O-methylation steps in the ubiquinone biosynthetic pathway. This is Ubiquinone biosynthesis O-methyltransferase from Salmonella arizonae (strain ATCC BAA-731 / CDC346-86 / RSK2980).